The chain runs to 164 residues: Photosystem II extrinsic protein V (164 aa).

Residues Met1–Ala27 form the signal peptide. 4 residues coordinate heme c: Cys64, Cys67, His68, and His119.

Belongs to the cytochrome c family. PsbV subfamily. As to quaternary structure, PSII is composed of 1 copy each of membrane proteins PsbA, PsbB, PsbC, PsbD, PsbE, PsbF, PsbH, PsbI, PsbJ, PsbK, PsbL, PsbM, PsbT, PsbY, PsbZ, Psb30/Ycf12, at least 3 peripheral proteins of the oxygen-evolving complex and a large number of cofactors. It forms dimeric complexes. Heme c serves as cofactor.

Its subcellular location is the plastid. It is found in the chloroplast thylakoid membrane. Functionally, one of the extrinsic, lumenal subunits of photosystem II (PSII). PSII is a light-driven water plastoquinone oxidoreductase, using light energy to abstract electrons from H(2)O, generating a proton gradient subsequently used for ATP formation. The extrinsic proteins stabilize the structure of photosystem II oxygen-evolving complex (OEC), the ion environment of oxygen evolution and protect the OEC against heat-induced inactivation. The protein is Photosystem II extrinsic protein V of Emiliania huxleyi (Coccolithophore).